We begin with the raw amino-acid sequence, 248 residues long: Small ribosomal subunit protein uS2 (248 aa).

It belongs to the universal ribosomal protein uS2 family.

This Thiobacillus denitrificans (strain ATCC 25259 / T1) protein is Small ribosomal subunit protein uS2.